We begin with the raw amino-acid sequence, 309 residues long: tRNA uridine(34) hydroxylase (309 aa).

Residues Ser-130–Ser-224 enclose the Rhodanese domain. The active-site Cysteine persulfide intermediate is Cys-184.

Belongs to the TrhO family.

The catalysed reaction is uridine(34) in tRNA + AH2 + O2 = 5-hydroxyuridine(34) in tRNA + A + H2O. In terms of biological role, catalyzes oxygen-dependent 5-hydroxyuridine (ho5U) modification at position 34 in tRNAs. In Rhizobium leguminosarum bv. trifolii (strain WSM2304), this protein is tRNA uridine(34) hydroxylase.